Here is a 431-residue protein sequence, read N- to C-terminus: Protoheme IX farnesyltransferase, mitochondrial (431 aa).

Residues 1–33 (MWRRSVVYRFSSRISVSSSLPNPRLIPWSRELC) constitute a mitochondrion transit peptide. 9 helical membrane-spanning segments follow: residues 109 to 129 (LVVA…AISF), 131 to 153 (GLCY…NQIF), 174 to 194 (ISVP…ACLL), 200 to 220 (MLAA…YTPL), 226 to 246 (INTW…WAAA), 255 to 275 (MILP…LAHL), 298 to 317 (IAAV…FIAY), 322 to 344 (TSSW…AFSF), and 356 to 376 (MFHA…LHRV).

The protein belongs to the ubiA prenyltransferase (TC 3.D.4.8) family.

Its subcellular location is the mitochondrion inner membrane. It catalyses the reaction heme b + (2E,6E)-farnesyl diphosphate + H2O = Fe(II)-heme o + diphosphate. Its function is as follows. Converts protoheme IX and farnesyl diphosphate to heme O. The chain is Protoheme IX farnesyltransferase, mitochondrial (COX10) from Arabidopsis thaliana (Mouse-ear cress).